The primary structure comprises 422 residues: Serine--tRNA ligase (422 aa).

T238 to E240 is a binding site for L-serine. R269 to E271 is an ATP binding site. Residue E292 coordinates L-serine. An ATP-binding site is contributed by E356–S359. S390 serves as a coordination point for L-serine.

This sequence belongs to the class-II aminoacyl-tRNA synthetase family. Type-1 seryl-tRNA synthetase subfamily. In terms of assembly, homodimer. The tRNA molecule binds across the dimer.

The protein localises to the cytoplasm. The catalysed reaction is tRNA(Ser) + L-serine + ATP = L-seryl-tRNA(Ser) + AMP + diphosphate + H(+). It carries out the reaction tRNA(Sec) + L-serine + ATP = L-seryl-tRNA(Sec) + AMP + diphosphate + H(+). Its pathway is aminoacyl-tRNA biosynthesis; selenocysteinyl-tRNA(Sec) biosynthesis; L-seryl-tRNA(Sec) from L-serine and tRNA(Sec): step 1/1. Its function is as follows. Catalyzes the attachment of serine to tRNA(Ser). Is also able to aminoacylate tRNA(Sec) with serine, to form the misacylated tRNA L-seryl-tRNA(Sec), which will be further converted into selenocysteinyl-tRNA(Sec). This chain is Serine--tRNA ligase, found in Helicobacter hepaticus (strain ATCC 51449 / 3B1).